We begin with the raw amino-acid sequence, 172 residues long: SsrA-binding protein (172 aa).

This sequence belongs to the SmpB family.

The protein localises to the cytoplasm. In terms of biological role, required for rescue of stalled ribosomes mediated by trans-translation. Binds to transfer-messenger RNA (tmRNA), required for stable association of tmRNA with ribosomes. tmRNA and SmpB together mimic tRNA shape, replacing the anticodon stem-loop with SmpB. tmRNA is encoded by the ssrA gene; the 2 termini fold to resemble tRNA(Ala) and it encodes a 'tag peptide', a short internal open reading frame. During trans-translation Ala-aminoacylated tmRNA acts like a tRNA, entering the A-site of stalled ribosomes, displacing the stalled mRNA. The ribosome then switches to translate the ORF on the tmRNA; the nascent peptide is terminated with the 'tag peptide' encoded by the tmRNA and targeted for degradation. The ribosome is freed to recommence translation, which seems to be the essential function of trans-translation. This is SsrA-binding protein from Dehalococcoides mccartyi (strain ATCC BAA-2100 / JCM 16839 / KCTC 5957 / BAV1).